The following is a 292-amino-acid chain: NAD kinase (292 aa).

The active-site Proton acceptor is the Asp73. Residues Asp73–Gly74, Asn147–Glu148, His158, Arg175, Asp177, Thr188–Ser193, and Gln247 contribute to the NAD(+) site.

It belongs to the NAD kinase family. A divalent metal cation is required as a cofactor.

The protein resides in the cytoplasm. The enzyme catalyses NAD(+) + ATP = ADP + NADP(+) + H(+). Its function is as follows. Involved in the regulation of the intracellular balance of NAD and NADP, and is a key enzyme in the biosynthesis of NADP. Catalyzes specifically the phosphorylation on 2'-hydroxyl of the adenosine moiety of NAD to yield NADP. This Buchnera aphidicola subsp. Schizaphis graminum (strain Sg) protein is NAD kinase.